We begin with the raw amino-acid sequence, 858 residues long: Potassium channel KOR1 (858 aa).

Residues 1–41 (MGRGIGSKRRVEDDDGENMPGRKKKEEEEEEEDDDGEEEYE) are disordered. Residues 1-102 (MGRGIGSKRR…PDNKWYRLWT (102 aa)) are Cytoplasmic-facing. The span at 27-41 (EEEEEEDDDGEEEYE) shows a compositional bias: acidic residues. A helical membrane pass occupies residues 103 to 123 (RFILVWAVYSSFFTPLEFGFF). Residues 124 to 130 (RGLPRNL) lie on the Extracellular side of the membrane. A helical membrane pass occupies residues 131 to 151 (FFLDIAGQIAFLIDIVLRFFV). The Cytoplasmic segment spans residues 152 to 174 (AYRDPDTYRMVHNPTSIALRYCK). The helical transmembrane segment at 175 to 195 (SSFIFDLLGCFPWDAIYKACG) threads the bilayer. Topologically, residues 196–201 (SKEEVR) are extracellular. The chain crosses the membrane as a helical; Voltage-sensor span at residues 202 to 222 (YLLWIRLTRAMKVTEFFRSME). The Cytoplasmic portion of the chain corresponds to 223–236 (KDIRINYLFTRIVK). A helical membrane pass occupies residues 237–257 (LIVVELYCTHTAACIFYYLAT). Over 258-292 (TLPESMEGYTWIGSLQLGDYSYSHFREIDLTKRYM) the chain is Extracellular. The pore-forming intramembrane region spans 293–312 (TSLYFAIVTMATVGYGDIHA). The Extracellular portion of the chain corresponds to 313–316 (VNVR). The chain crosses the membrane as a helical span at residues 317–337 (EMIFIMIYVSFDMILGAYLIG). Residues 338-858 (NMTALIVKGS…GDDGGTEARQ (521 aa)) lie on the Cytoplasmic side of the membrane. An a nucleoside 3',5'-cyclic phosphate-binding site is contributed by 419 to 539 (LFKGCSAEFI…RRILSNLSES (121 aa)). ANK repeat units lie at residues 559-592 (KQEA…DPKN), 596-625 (DGRS…DIDL), 629-658 (FGNT…KLSL), 660-689 (NAGS…DPNA), 693-722 (DHRA…SVFA), and 726-756 (WGTT…ELSR). The KHA domain maps to 772 to 858 (RCSVFPHHPW…GDDGGTEARQ (87 aa)).

It belongs to the potassium channel family. Plant (TC 1.A.1.4) subfamily.

The protein localises to the membrane. Its function is as follows. Probable outward-rectifying potassium channel. This is Potassium channel KOR1 from Oryza sativa subsp. japonica (Rice).